The chain runs to 349 residues: Isopentenyl-diphosphate delta-isomerase (349 aa).

Arginine 12 to lysine 13 lines the substrate pocket. Residues glycine 69–threonine 71, serine 99, and asparagine 128 contribute to the FMN site. Glutamine 158 contributes to the substrate binding site. Glutamate 159 is a Mg(2+) binding site. FMN is bound by residues lysine 189, serine 214, threonine 219, glycine 265–arginine 267, and serine 286–glycine 287.

The protein belongs to the IPP isomerase type 2 family. As to quaternary structure, homooctamer. Dimer of tetramers. The cofactor is FMN. It depends on NADPH as a cofactor. Mg(2+) serves as cofactor.

It localises to the cytoplasm. It catalyses the reaction isopentenyl diphosphate = dimethylallyl diphosphate. Its function is as follows. Involved in the biosynthesis of isoprenoids. Catalyzes the 1,3-allylic rearrangement of the homoallylic substrate isopentenyl (IPP) to its allylic isomer, dimethylallyl diphosphate (DMAPP). The protein is Isopentenyl-diphosphate delta-isomerase of Latilactobacillus sakei subsp. sakei (strain 23K) (Lactobacillus sakei subsp. sakei).